A 36-amino-acid chain; its full sequence is SDGRNAGADRKGFGLISQMFKLSCCADPACKHTPGC.

The propeptide occupies 1–21 (SDGRNAGADRKGFGLISQMFK). 2 disulfides stabilise this stretch: cysteine 24–cysteine 30 and cysteine 25–cysteine 36.

The protein belongs to the conotoxin A superfamily. Expressed by the venom duct.

The protein localises to the secreted. Its function is as follows. Alpha-conotoxins act on postsynaptic membranes, they bind to the nicotinic acetylcholine receptors (nAChR) and thus inhibit them. This Conus pulicarius (Flea-bitten cone) protein is Alpha-conotoxin-like Pu1.3.